A 131-amino-acid chain; its full sequence is Large ribosomal subunit protein bL17 (131 aa).

It belongs to the bacterial ribosomal protein bL17 family. As to quaternary structure, part of the 50S ribosomal subunit. Contacts protein L32.

The sequence is that of Large ribosomal subunit protein bL17 from Herminiimonas arsenicoxydans.